The chain runs to 88 residues: Large ribosomal subunit protein bL31B (88 aa).

Belongs to the bacterial ribosomal protein bL31 family. Type B subfamily. In terms of assembly, part of the 50S ribosomal subunit.

This Leuconostoc mesenteroides subsp. mesenteroides (strain ATCC 8293 / DSM 20343 / BCRC 11652 / CCM 1803 / JCM 6124 / NCDO 523 / NBRC 100496 / NCIMB 8023 / NCTC 12954 / NRRL B-1118 / 37Y) protein is Large ribosomal subunit protein bL31B.